Reading from the N-terminus, the 351-residue chain is GDSL esterase/lipase At3g53100 (351 aa).

Positions M1 to G24 are cleaved as a signal peptide. S36 (nucleophile) is an active-site residue. N-linked (GlcNAc...) asparagine glycosylation is found at N234, N254, and N318. Residues D326 and H329 contribute to the active site.

This sequence belongs to the 'GDSL' lipolytic enzyme family.

The protein localises to the secreted. This is GDSL esterase/lipase At3g53100 from Arabidopsis thaliana (Mouse-ear cress).